The chain runs to 526 residues: MSNVFDGDSPTNLAEYSVSELSGSIKRTVETAFDQVRVRGEISGYRGPHSSGHAYFALKDDRARIDAVIWKGTFSRLKFRPEEGMEVIATGKVTTFPGSSKYQIVIETLEPAGAGALMALIEERKRKLGAEGLFDAARKKRLPFMPGVIGVVTSPTGAVIRDILHRISDRFPVHVLVWPVKVQGEGSGEEVANAIRGFNALEPSGTIPRPDVLIVARGGGSLEDLWSFNDEIVVRAAAESAIPLISAVGHETDWTLIDYAADVRAPTPTGAAEMAVPVKAELEAQAAGLAARLQGCMNRQMDQRRQSVRALMRALPSLDQLLALPRRRFDEAATGLGRGLELNTINKRRGFERVAAHLRPDLLAGRIAERRQTLNERMARAERMVERLIDRSKSRVDRAEAILASLPARLKTQTDRGRERLGNLSRHADTAVRHQLTRARSELSAQDRVLQSLSYKNVLKRGYAVIRDEDNRPVSQAAHLSAGMGIAIEFADGRVGAMTTEGGTPPAGAKKRSTKPAEPPKQGSLF.

The disordered stretch occupies residues 497–526 (AMTTEGGTPPAGAKKRSTKPAEPPKQGSLF).

This sequence belongs to the XseA family. Heterooligomer composed of large and small subunits.

It localises to the cytoplasm. The catalysed reaction is Exonucleolytic cleavage in either 5'- to 3'- or 3'- to 5'-direction to yield nucleoside 5'-phosphates.. Bidirectionally degrades single-stranded DNA into large acid-insoluble oligonucleotides, which are then degraded further into small acid-soluble oligonucleotides. The chain is Exodeoxyribonuclease 7 large subunit from Rhizobium johnstonii (strain DSM 114642 / LMG 32736 / 3841) (Rhizobium leguminosarum bv. viciae).